We begin with the raw amino-acid sequence, 278 residues long: Octanoyltransferase LipM (278 aa).

The region spanning 33 to 248 (KKMPPTIRFY…GFEKGLDVEL (216 aa)) is the BPL/LPL catalytic domain. C150 (acyl-thioester intermediate) is an active-site residue.

This sequence belongs to the octanoyltransferase LipM family. Monomer.

The catalysed reaction is octanoyl-[ACP] + L-lysyl-[protein] = N(6)-octanoyl-L-lysyl-[protein] + holo-[ACP] + H(+). It participates in protein modification; protein lipoylation via endogenous pathway; protein N(6)-(lipoyl)lysine from octanoyl-[acyl-carrier-protein]. Catalyzes the transfer of endogenously produced octanoic acid from octanoyl-acyl-carrier-protein onto the lipoyl domain of GcvH, an intermediate carrier during protein lipoylation. This chain is Octanoyltransferase LipM, found in Bacillus anthracis.